The following is a 128-amino-acid chain: MARQQRRGRKVKKNIPNGVAYIQSTFNNTIVTITDPNGDVVSWASAGSTGFKGAKKGTPFAAQMAAESAARQAMENGMRQIEVMVSGPGAGRETAIRALQATGLEITLIRDITPIPHNGCRPPKRRRV.

The protein belongs to the universal ribosomal protein uS11 family. In terms of assembly, part of the 30S ribosomal subunit. Interacts with proteins S7 and S18. Binds to IF-3.

In terms of biological role, located on the platform of the 30S subunit, it bridges several disparate RNA helices of the 16S rRNA. Forms part of the Shine-Dalgarno cleft in the 70S ribosome. This Synechococcus sp. (strain JA-2-3B'a(2-13)) (Cyanobacteria bacterium Yellowstone B-Prime) protein is Small ribosomal subunit protein uS11.